Reading from the N-terminus, the 1420-residue chain is DNA-directed RNA polymerase subunit beta' (1420 aa).

Zn(2+) contacts are provided by Cys-71, Cys-73, Cys-86, and Cys-89. Mg(2+) contacts are provided by Asp-461, Asp-463, and Asp-465. Zn(2+)-binding residues include Cys-815, Cys-889, Cys-896, and Cys-899.

This sequence belongs to the RNA polymerase beta' chain family. In terms of assembly, the RNAP catalytic core consists of 2 alpha, 1 beta, 1 beta' and 1 omega subunit. When a sigma factor is associated with the core the holoenzyme is formed, which can initiate transcription. Mg(2+) serves as cofactor. Zn(2+) is required as a cofactor.

It carries out the reaction RNA(n) + a ribonucleoside 5'-triphosphate = RNA(n+1) + diphosphate. In terms of biological role, DNA-dependent RNA polymerase catalyzes the transcription of DNA into RNA using the four ribonucleoside triphosphates as substrates. This Histophilus somni (strain 129Pt) (Haemophilus somnus) protein is DNA-directed RNA polymerase subunit beta'.